Reading from the N-terminus, the 239-residue chain is Ribosomal RNA small subunit methyltransferase G (239 aa).

S-adenosyl-L-methionine-binding positions include glycine 77, phenylalanine 82, 128-129 (AE), and arginine 147. A disordered region spans residues 219–239 (KNTPKKYPRKPGTPNKSPIEG).

It belongs to the methyltransferase superfamily. RNA methyltransferase RsmG family.

The protein localises to the cytoplasm. In terms of biological role, specifically methylates the N7 position of guanine in position 535 of 16S rRNA. In Bacillus subtilis (strain 168), this protein is Ribosomal RNA small subunit methyltransferase G.